The chain runs to 159 residues: Phosphopantetheine adenylyltransferase (159 aa).

Residue T9 participates in substrate binding. ATP is bound by residues 9-10 and H17; that span reads TF. K41, L73, and R87 together coordinate substrate. ATP-binding positions include 88-90, E98, and 123-129; these read GLR and YSYISST.

The protein belongs to the bacterial CoaD family. Homohexamer. Mg(2+) is required as a cofactor.

It is found in the cytoplasm. It catalyses the reaction (R)-4'-phosphopantetheine + ATP + H(+) = 3'-dephospho-CoA + diphosphate. It participates in cofactor biosynthesis; coenzyme A biosynthesis; CoA from (R)-pantothenate: step 4/5. Functionally, reversibly transfers an adenylyl group from ATP to 4'-phosphopantetheine, yielding dephospho-CoA (dPCoA) and pyrophosphate. This chain is Phosphopantetheine adenylyltransferase, found in Azotobacter vinelandii (strain DJ / ATCC BAA-1303).